We begin with the raw amino-acid sequence, 419 residues long: S-adenosylmethionine synthase (419 aa).

His-15 is a binding site for ATP. Residue Asp-17 coordinates Mg(2+). Glu-43 lines the K(+) pocket. The L-methionine site is built by Glu-56 and Gln-99. The flexible loop stretch occupies residues 99–109 (QSPEIAQGVSC). ATP is bound by residues 173-175 (DGK), 253-254 (RF), Asp-262, 268-269 (RK), Ala-285, and Lys-289. Position 262 (Asp-262) interacts with L-methionine. An L-methionine-binding site is contributed by Lys-293.

It belongs to the AdoMet synthase family. Homotetramer; dimer of dimers. Requires Mg(2+) as cofactor. K(+) is required as a cofactor.

The protein localises to the cytoplasm. The catalysed reaction is L-methionine + ATP + H2O = S-adenosyl-L-methionine + phosphate + diphosphate. It participates in amino-acid biosynthesis; S-adenosyl-L-methionine biosynthesis; S-adenosyl-L-methionine from L-methionine: step 1/1. Functionally, catalyzes the formation of S-adenosylmethionine (AdoMet) from methionine and ATP. The overall synthetic reaction is composed of two sequential steps, AdoMet formation and the subsequent tripolyphosphate hydrolysis which occurs prior to release of AdoMet from the enzyme. This chain is S-adenosylmethionine synthase, found in Gloeobacter violaceus (strain ATCC 29082 / PCC 7421).